A 4814-amino-acid chain; its full sequence is Nonribosomal peptide synthetase SIDC (4814 aa).

The segment at 21-453 is adenylation 1; that stretch reads PGPTLLHQLV…MKTSGCHGAA (433 aa). The region spanning 528–601 is the Carrier 1 domain; the sequence is DLKKSTEPEL…HLVSSIKIID (74 aa). The residue at position 562 (Ser-562) is an O-(pantetheine 4'-phosphoryl)serine. The segment at 637-1045 is condensation 1; sequence VQDIIPCTNL…SLLESMRSME (409 aa). Positions 1101–1488 are adenylation 2; sequence TYTDLNRNAN…SRVSSATAAV (388 aa). 2 Carrier domains span residues 1589 to 1666 and 2134 to 2210; these read EDWN…HSSH and SSWT…FENG. Residues Ser-1626 and Ser-2171 each carry the O-(pantetheine 4'-phosphoryl)serine modification. 2 condensation regions span residues 1706–2210 and 2243–2649; these read LQEA…FENG and LPCT…HQHD. Residues 2709–3100 are adenylation 3; sequence TFAQLNSIGN…IRSVKNIHDV (392 aa). In terms of domain architecture, Carrier 4 spans 3203–3280; it reads SKDSAGYQKL…DLAVALSTAS (78 aa). Ser-3240 carries the O-(pantetheine 4'-phosphoryl)serine modification. The condensation 4 stretch occupies residues 3319 to 3732; that stretch reads YIYPCSPLQQ…VQVETALVDA (414 aa). Residues 3747 to 3823 form the Carrier 5 domain; it reads EVWGPAADVL…YLSSLVMRLT (77 aa). O-(pantetheine 4'-phosphoryl)serine is present on Ser-3784. The tract at residues 3857 to 4258 is condensation 5; sequence DILPTTPLQD…YVLRHAEEDV (402 aa). A Carrier 6 domain is found at 4295–4368; sequence NATSLAIRKV…HMAEQVAALG (74 aa). O-(pantetheine 4'-phosphoryl)serine is present on Ser-4329. Residues 4504–4686 form a condensation 6 region; the sequence is ETLLRLRIHH…HEDMQKITAD (183 aa).

Belongs to the NRP synthetase family. It depends on pantetheine 4'-phosphate as a cofactor.

Its pathway is siderophore biosynthesis. Functionally, nonribosomal peptide synthetase; part of the gene cluster that mediates the biosynthesis of at least 11 siderophores, including beauverichelin A, dimerumic acid (DA), Na-dimethyl coprogen (NADC), eleutherazine B, ferricrocin (FC), fusarinine A, fusarinine C (FsC), metachelin A, mevalonolactone, rhodotorulic acid (RA) and tenellin. This cocktail of siderophores for iron metabolism is essential for virulence, and more specifically for the fungal virulence in penetrating through the host cuticle. Siderophore synthesis is also involved in conidial germination under iron-deficient conditions. SIDC catalyzes the assembly of ferricrocin whereas SIDD catalyzes the assembly of fusarinine C. This is Nonribosomal peptide synthetase SIDC from Beauveria bassiana (strain ARSEF 2860) (White muscardine disease fungus).